We begin with the raw amino-acid sequence, 181 residues long: Protein GrpE (181 aa).

Positions 1–13 (MENTQENPATQSA) are enriched in polar residues. The interval 1-39 (MENTQENPATQSAEDIGSEKQAAQGAAPAAEAADAALAE) is disordered. The span at 21-39 (QAAQGAAPAAEAADAALAE) shows a compositional bias: low complexity.

Belongs to the GrpE family. Homodimer.

It is found in the cytoplasm. In terms of biological role, participates actively in the response to hyperosmotic and heat shock by preventing the aggregation of stress-denatured proteins, in association with DnaK and GrpE. It is the nucleotide exchange factor for DnaK and may function as a thermosensor. Unfolded proteins bind initially to DnaJ; upon interaction with the DnaJ-bound protein, DnaK hydrolyzes its bound ATP, resulting in the formation of a stable complex. GrpE releases ADP from DnaK; ATP binding to DnaK triggers the release of the substrate protein, thus completing the reaction cycle. Several rounds of ATP-dependent interactions between DnaJ, DnaK and GrpE are required for fully efficient folding. This Burkholderia lata (strain ATCC 17760 / DSM 23089 / LMG 22485 / NCIMB 9086 / R18194 / 383) protein is Protein GrpE.